The primary structure comprises 311 residues: HPr kinase/phosphorylase (311 aa).

Active-site residues include histidine 139 and lysine 160. 154-161 (GASGVGKS) contacts ATP. Serine 161 serves as a coordination point for Mg(2+). Aspartate 178 functions as the Proton acceptor; for phosphorylation activity. Proton donor; for dephosphorylation activity in the catalytic mechanism. Positions 202 to 211 (LEIRGIGIID) are important for the catalytic mechanism of both phosphorylation and dephosphorylation. Glutamate 203 lines the Mg(2+) pocket. The active site involves arginine 244. Positions 265 to 270 (PVRPGR) are important for the catalytic mechanism of dephosphorylation.

Belongs to the HPrK/P family. As to quaternary structure, homohexamer. It depends on Mg(2+) as a cofactor.

It carries out the reaction [HPr protein]-L-serine + ATP = [HPr protein]-O-phospho-L-serine + ADP + H(+). The catalysed reaction is [HPr protein]-O-phospho-L-serine + phosphate + H(+) = [HPr protein]-L-serine + diphosphate. Its function is as follows. Catalyzes the ATP- as well as the pyrophosphate-dependent phosphorylation of a specific serine residue in HPr, a phosphocarrier protein of the phosphoenolpyruvate-dependent sugar phosphotransferase system (PTS). HprK/P also catalyzes the pyrophosphate-producing, inorganic phosphate-dependent dephosphorylation (phosphorolysis) of seryl-phosphorylated HPr (P-Ser-HPr). The two antagonistic activities of HprK/P are regulated by several intracellular metabolites, which change their concentration in response to the absence or presence of rapidly metabolisable carbon sources (glucose, fructose, etc.) in the growth medium. Therefore, by controlling the phosphorylation state of HPr, HPrK/P is a sensor enzyme that plays a major role in the regulation of carbon metabolism and sugar transport: it mediates carbon catabolite repression (CCR), and regulates PTS-catalyzed carbohydrate uptake and inducer exclusion. In Exiguobacterium sibiricum (strain DSM 17290 / CCUG 55495 / CIP 109462 / JCM 13490 / 255-15), this protein is HPr kinase/phosphorylase.